A 277-amino-acid polypeptide reads, in one-letter code: MFAVSSRRVLPGFTLSLGTSLLFVCLILLLPLSALVMQLAQMSWAQYWEVITNPQVVAAYKVTLLSAFVASIFNGVFGLLMAWILTRYRFPGRTLLDALMDLPFALPTAVAGLTLASLFSVNGFYGEWLAKFDIKVTYTWLGIAVAMAFTSIPFVVRTVQPVLEELGPEYEEAAETLGATRWQSFCKVVLPELSPALVAGVALSFTRSLGEFGAVIFIAGNIAWKTEVTSLMIFVRLQEFDYPAASAIASVILAASLLLLFSINTLQSRFGRRVVGH.

Helical transmembrane passes span Leu-17–Met-37, Leu-64–Ile-84, Leu-99–Phe-119, Val-136–Val-156, Phe-185–Phe-205, Val-215–Val-235, and Pro-243–Ile-263. The 204-residue stretch at Tyr-60–Ile-263 folds into the ABC transmembrane type-1 domain.

It belongs to the binding-protein-dependent transport system permease family. CysTW subfamily. As to quaternary structure, the complex is composed of two ATP-binding proteins (CysA), two transmembrane proteins (CysT and CysW) and a solute-binding protein (CysP).

It localises to the cell inner membrane. Part of the ABC transporter complex CysAWTP (TC 3.A.1.6.1) involved in sulfate/thiosulfate import. Probably responsible for the translocation of the substrate across the membrane. In Escherichia coli (strain K12), this protein is Sulfate transport system permease protein CysT (cysU).